We begin with the raw amino-acid sequence, 508 residues long: Lysine--tRNA ligase (508 aa).

Mg(2+)-binding residues include Glu-418 and Glu-425.

The protein belongs to the class-II aminoacyl-tRNA synthetase family. Homodimer. Mg(2+) serves as cofactor.

The protein resides in the cytoplasm. It catalyses the reaction tRNA(Lys) + L-lysine + ATP = L-lysyl-tRNA(Lys) + AMP + diphosphate. This Burkholderia pseudomallei (strain K96243) protein is Lysine--tRNA ligase.